The primary structure comprises 111 residues: Small ribosomal subunit protein uS10 (111 aa).

This sequence belongs to the universal ribosomal protein uS10 family. In terms of assembly, part of the 30S ribosomal subunit.

Involved in the binding of tRNA to the ribosomes. The sequence is that of Small ribosomal subunit protein uS10 from Ehrlichia ruminantium (strain Welgevonden).